A 120-amino-acid polypeptide reads, in one-letter code: Small ribosomal subunit protein uS13 (120 aa).

The segment at 97–120 (PVRGQRTKTNARTRKGKKKTVGAK) is disordered.

The protein belongs to the universal ribosomal protein uS13 family. Part of the 30S ribosomal subunit. Forms a loose heterodimer with protein S19. Forms two bridges to the 50S subunit in the 70S ribosome.

In terms of biological role, located at the top of the head of the 30S subunit, it contacts several helices of the 16S rRNA. In the 70S ribosome it contacts the 23S rRNA (bridge B1a) and protein L5 of the 50S subunit (bridge B1b), connecting the 2 subunits; these bridges are implicated in subunit movement. Contacts the tRNAs in the A and P-sites. This Nitratiruptor sp. (strain SB155-2) protein is Small ribosomal subunit protein uS13.